The primary structure comprises 287 residues: Nucleotide-binding protein TGRD_433 (287 aa).

9 to 16 (GMSGAGKS) lines the ATP pocket. Position 60-63 (60-63 (DSRA)) interacts with GTP.

This sequence belongs to the RapZ-like family.

Its function is as follows. Displays ATPase and GTPase activities. The chain is Nucleotide-binding protein TGRD_433 from Endomicrobium trichonymphae.